The chain runs to 237 residues: Proteasome subunit beta 2 (237 aa).

The span at 1–14 (MNNWSQGSTPQGSD) shows a compositional bias: polar residues. A propeptide spans 1–42 (MNNWSQGSTPQGSDPSPYAPELGSLPDGSQSDDHGDTVNKTG) (removed in mature form; by autocatalysis). Residues 1–45 (MNNWSQGSTPQGSDPSPYAPELGSLPDGSQSDDHGDTVNKTGTTT) form a disordered region. The Nucleophile role is filled by Thr43.

Belongs to the peptidase T1B family. In terms of assembly, the 20S proteasome core is composed of 14 alpha and 14 beta subunits that assemble into four stacked heptameric rings, resulting in a barrel-shaped structure. The two inner rings, each composed of seven catalytic beta subunits, are sandwiched by two outer rings, each composed of seven alpha subunits. The catalytic chamber with the active sites is on the inside of the barrel. Has a gated structure, the ends of the cylinder being occluded by the N-termini of the alpha-subunits. Is capped at one or both ends by the proteasome regulatory ATPase, PAN.

The protein localises to the cytoplasm. It carries out the reaction Cleavage of peptide bonds with very broad specificity.. With respect to regulation, the formation of the proteasomal ATPase PAN-20S proteasome complex, via the docking of the C-termini of PAN into the intersubunit pockets in the alpha-rings, triggers opening of the gate for substrate entry. Interconversion between the open-gate and close-gate conformations leads to a dynamic regulation of the 20S proteasome proteolysis activity. In terms of biological role, component of the proteasome core, a large protease complex with broad specificity involved in protein degradation. The chain is Proteasome subunit beta 2 from Haloterrigena turkmenica (strain ATCC 51198 / DSM 5511 / JCM 9101 / NCIMB 13204 / VKM B-1734 / 4k) (Halococcus turkmenicus).